Here is a 329-residue protein sequence, read N- to C-terminus: UPF0725 protein EMB2204 (329 aa).

This sequence belongs to the UPF0725 (EMB2204) family.

May be involved in embryogenesis. In Arabidopsis thaliana (Mouse-ear cress), this protein is UPF0725 protein EMB2204 (EMB2204).